The following is a 51-amino-acid chain: Sperm protamine P1 (51 aa).

The protein belongs to the protamine P1 family. In terms of tissue distribution, testis.

It localises to the nucleus. The protein resides in the chromosome. Functionally, protamines substitute for histones in the chromatin of sperm during the haploid phase of spermatogenesis. They compact sperm DNA into a highly condensed, stable and inactive complex. The sequence is that of Sperm protamine P1 (PRM1) from Trachypithecus johnii (Nilgiri langur).